The primary structure comprises 159 residues: SsrA-binding protein (159 aa).

Residues 133–159 (KKLHDKRETSKERDWNRQKNRLLKERG) form a disordered region. The span at 137-159 (DKRETSKERDWNRQKNRLLKERG) shows a compositional bias: basic and acidic residues.

The protein belongs to the SmpB family.

Its subcellular location is the cytoplasm. Functionally, required for rescue of stalled ribosomes mediated by trans-translation. Binds to transfer-messenger RNA (tmRNA), required for stable association of tmRNA with ribosomes. tmRNA and SmpB together mimic tRNA shape, replacing the anticodon stem-loop with SmpB. tmRNA is encoded by the ssrA gene; the 2 termini fold to resemble tRNA(Ala) and it encodes a 'tag peptide', a short internal open reading frame. During trans-translation Ala-aminoacylated tmRNA acts like a tRNA, entering the A-site of stalled ribosomes, displacing the stalled mRNA. The ribosome then switches to translate the ORF on the tmRNA; the nascent peptide is terminated with the 'tag peptide' encoded by the tmRNA and targeted for degradation. The ribosome is freed to recommence translation, which seems to be the essential function of trans-translation. The protein is SsrA-binding protein of Sinorhizobium medicae (strain WSM419) (Ensifer medicae).